Here is a 551-residue protein sequence, read N- to C-terminus: Scaffold protein OPG125 (551 aa).

This sequence belongs to the orthopoxvirus protein OPG125 family. In terms of assembly, homotrimer. Self-assembles to form a layer. Interacts with OPG158 (via N-terminus); this interaction is necessary for OPG125 association with membranes.

Its subcellular location is the membrane. Its function is as follows. Scaffold protein which forms a transitory spherical honeycomb lattice providing curvature and rigidity to the convex membrane of crescent and immature virions (IV). This association occurs concomitantly with viral membrane formation. Targeted by the drug rifampicin, which prevents the formation of this lattice, and hence virus morphogenesis. In the presence of rifampicin, irregularly shaped membranes that lack the honeycomb layer accumulate around areas of electron-dense viroplasm. This layer is lost from virions during maturation from IV to mature virion (MV), through the proteolysis of OPG158 N-terminus. The sequence is that of Scaffold protein OPG125 (OPG125) from Vaccinia virus (strain Ankara) (VACV).